The chain runs to 228 residues: MQLCIALDLPSQEENLKLLESLVGLPVWIKVGLRSYIRDGKEFLGRIRQIDPRFELFLDLKLHDIPNTMGDAAEEIASLGVGMFTLHASSGGEAMREVAARLARFPRRPLAFAVTALTSFGEEGFREIYNASLESKALDMAMLAAQNGMDGVVCSVFESQRIKSYVAQDFLTLTPGIRPFGEPSGDQKRVADLHEAKSASSDFIVVGRPVYKHPRPREAVEKILEGIA.

Substrate is bound by residues Asp8, Lys30, 59-68 (DLKLHDIPNT), Thr118, Arg178, Gln187, Gly207, and Arg208. The active-site Proton donor is Lys61.

This sequence belongs to the OMP decarboxylase family. Type 1 subfamily. As to quaternary structure, homodimer.

The enzyme catalyses orotidine 5'-phosphate + H(+) = UMP + CO2. It functions in the pathway pyrimidine metabolism; UMP biosynthesis via de novo pathway; UMP from orotate: step 2/2. Functionally, catalyzes the decarboxylation of orotidine 5'-monophosphate (OMP) to uridine 5'-monophosphate (UMP). The sequence is that of Orotidine 5'-phosphate decarboxylase from Wolinella succinogenes (strain ATCC 29543 / DSM 1740 / CCUG 13145 / JCM 31913 / LMG 7466 / NCTC 11488 / FDC 602W) (Vibrio succinogenes).